An 829-amino-acid chain; its full sequence is Probable beta-glucosidase H (829 aa).

Residue Asn13 is glycosylated (N-linked (GlcNAc...) asparagine). Asp225 is an active-site residue. Asn304, Asn473, Asn602, Asn627, Asn664, and Asn749 each carry an N-linked (GlcNAc...) asparagine glycan. The region spanning Arg389–Val548 is the PA14 domain.

It belongs to the glycosyl hydrolase 3 family.

Its subcellular location is the secreted. The catalysed reaction is Hydrolysis of terminal, non-reducing beta-D-glucosyl residues with release of beta-D-glucose.. It functions in the pathway glycan metabolism; cellulose degradation. Its function is as follows. Beta-glucosidases are one of a number of cellulolytic enzymes involved in the degradation of cellulosic biomass. Catalyzes the last step releasing glucose from the inhibitory cellobiose. This is Probable beta-glucosidase H (bglH) from Aspergillus fumigatus (strain CBS 144.89 / FGSC A1163 / CEA10) (Neosartorya fumigata).